The sequence spans 259 residues: tRNA pseudouridine synthase A (259 aa).

The active-site Nucleophile is the aspartate 51. Tyrosine 109 provides a ligand contact to substrate.

Belongs to the tRNA pseudouridine synthase TruA family. In terms of assembly, homodimer.

It carries out the reaction uridine(38/39/40) in tRNA = pseudouridine(38/39/40) in tRNA. Its function is as follows. Formation of pseudouridine at positions 38, 39 and 40 in the anticodon stem and loop of transfer RNAs. The protein is tRNA pseudouridine synthase A of Nitrosococcus oceani (strain ATCC 19707 / BCRC 17464 / JCM 30415 / NCIMB 11848 / C-107).